Reading from the N-terminus, the 466-residue chain is MEEDTGIDEAKTYTVEKSEKVEPEKDGLSQFRDEEKSLGADMEDLHDETVRETLGKDQVQGVRENSSVEPNVEDVLEVNETDSVKETVVSAIVPVDEVEENRQVETSPSLAASSDSLTVTPCLSLDPATASTAQDLPLVSVPTKQEQRSDSPVVNRLSVTPVPRTPARDGYNWRKYGQKQVKSPKGSRSYYRCTYTECCAKKIECSNDSGNVVEIVNKGLHTHEPPRKTSFSPREIRVTTAIRPVSEDDTVVEELSIVPSGSDPSASTKEYICESQTLVDRKRHCENEAVEEPEPKRRLKKDNSQSSDSVSKPGKKNKFVVHAAGDVGICGDGYRWRKYGQKMVKGNPHPRNYYRCTSAGCPVRKHIETAVENTKAVIITYKGVHNHDMPVPKKRHGPPSSMLVAAAAPTSMRTRTDDQVNIPTSSQCSVGRESEKQSKEALDVGGEKVMESARTLLSIGFEIKQC.

Disordered stretches follow at residues M1–L45 and S140–P166. Over residues D8–L38 the composition is skewed to basic and acidic residues. The segment at residues V162–P226 is a DNA-binding region (WRKY 1). Positions 193, 198, 221, and 223 each coordinate Zn(2+). The segment at H284–N317 is disordered. Positions G325–P390 form a DNA-binding region, WRKY 2. 4 residues coordinate Zn(2+): C356, C361, H385, and H387. A disordered region spans residues T410–K439. Polar residues predominate over residues Q419–S429.

This sequence belongs to the WRKY group I family.

The protein resides in the nucleus. Its function is as follows. Transcription factor. Interacts specifically with the W box (5'-(T)TGAC[CT]-3'), a frequently occurring elicitor-responsive cis-acting element. This chain is Probable WRKY transcription factor 32 (WRKY32), found in Arabidopsis thaliana (Mouse-ear cress).